Here is a 161-residue protein sequence, read N- to C-terminus: Putative pre-16S rRNA nuclease (161 aa).

This sequence belongs to the YqgF nuclease family.

The protein resides in the cytoplasm. In terms of biological role, could be a nuclease involved in processing of the 5'-end of pre-16S rRNA. The polypeptide is Putative pre-16S rRNA nuclease (Bartonella bacilliformis (strain ATCC 35685 / KC583 / Herrer 020/F12,63)).